Reading from the N-terminus, the 254-residue chain is Phosphomannomutase (254 aa).

Residue aspartate 19 is the Nucleophile of the active site. Residues aspartate 19 and aspartate 21 each contribute to the Mg(2+) site. Aspartate 21 serves as the catalytic Proton donor/acceptor. The alpha-D-mannose 1-phosphate site is built by arginine 28, arginine 130, arginine 141, arginine 148, serine 186, and aspartate 188. Mg(2+) is bound by residues aspartate 216, phenylalanine 228, aspartate 230, and threonine 233. Phosphoserine is present on serine 240.

The protein belongs to the eukaryotic PMM family. Homodimer.

The protein resides in the cytoplasm. It catalyses the reaction alpha-D-mannose 1-phosphate = D-mannose 6-phosphate. The protein operates within nucleotide-sugar biosynthesis; GDP-alpha-D-mannose biosynthesis; alpha-D-mannose 1-phosphate from D-fructose 6-phosphate: step 2/2. Its function is as follows. Involved in the synthesis of the GDP-mannose and dolichol-phosphate-mannose required for a number of critical mannosyl transfer reactions such as folding and glycosylation of secretory proteins in the ER lumen. The sequence is that of Phosphomannomutase from Saccharomyces cerevisiae (strain ATCC 204508 / S288c) (Baker's yeast).